The primary structure comprises 240 residues: MIDQGRISVLSEEGDYLLVDKPLDWTSFDVVAKIRGAYKRNGAKRKVGHCGTLDPKATGLLILATGRKTKTISSLELLDKAYEGTIRLGAKTVSHDTESEEYDLRDVPSLDERAIREAATSMIGERMQQPPMHSAVWHNGKRLYELARQGHEVKERKARQIEIHQFEITGIELPYVHFYIRVSKGAYIRVIAHELGELLGVGGYLKSLKRVAIGQYQLSDAMSVDAVVDEITRAASVIEE.

Asp-54 serves as the catalytic Nucleophile.

This sequence belongs to the pseudouridine synthase TruB family. Type 1 subfamily.

The catalysed reaction is uridine(55) in tRNA = pseudouridine(55) in tRNA. Functionally, responsible for synthesis of pseudouridine from uracil-55 in the psi GC loop of transfer RNAs. The protein is tRNA pseudouridine synthase B of Chlorobaculum tepidum (strain ATCC 49652 / DSM 12025 / NBRC 103806 / TLS) (Chlorobium tepidum).